A 116-amino-acid polypeptide reads, in one-letter code: uncharacterized protein (116 aa).

2 helical membrane passes run 55-77 (LSYS…LYSF) and 87-109 (FSYG…YAAL).

The protein resides in the membrane. This is an uncharacterized protein from Saccharomyces cerevisiae (strain ATCC 204508 / S288c) (Baker's yeast).